The chain runs to 350 residues: Methylthioribose-1-phosphate isomerase (350 aa).

Substrate-binding positions include 47–49 (RGA), arginine 90, and glutamine 197. Aspartate 238 functions as the Proton donor in the catalytic mechanism. Residue 248–249 (NK) coordinates substrate.

The protein belongs to the eIF-2B alpha/beta/delta subunits family. MtnA subfamily.

The enzyme catalyses 5-(methylsulfanyl)-alpha-D-ribose 1-phosphate = 5-(methylsulfanyl)-D-ribulose 1-phosphate. Its pathway is amino-acid biosynthesis; L-methionine biosynthesis via salvage pathway; L-methionine from S-methyl-5-thio-alpha-D-ribose 1-phosphate: step 1/6. Catalyzes the interconversion of methylthioribose-1-phosphate (MTR-1-P) into methylthioribulose-1-phosphate (MTRu-1-P). The chain is Methylthioribose-1-phosphate isomerase from Nitratidesulfovibrio vulgaris (strain DP4) (Desulfovibrio vulgaris).